The following is a 325-amino-acid chain: Probable siderophore-binding lipoprotein YfiY (325 aa).

A signal peptide spans 1–20; the sequence is MKKHISMLFVFLMAVMVLSA. C21 is lipidated: N-palmitoyl cysteine. The S-diacylglycerol cysteine moiety is linked to residue C21. Residues 56–325 enclose the Fe/B12 periplasmic-binding domain; sequence RIVVLTNEGT…DIETYFLKTK (270 aa). Phosphoserine is present on S290. T302 is modified (phosphothreonine).

This sequence belongs to the bacterial solute-binding protein 8 family. The complex is composed of one ATP-binding protein (YusV), two transmembrane proteins (YfiZ and YfhA) and a solute-binding protein (YfiY). Interacts with FloT.

The protein resides in the cell membrane. It is found in the cytoplasm. Its subcellular location is the membrane raft. In terms of biological role, part of the ABC transporter complex YfiYZ/YfhA/YusV involved in import of the iron-hydroxamate siderophores schizokinen, arthrobactin and corprogen. Binds the siderophores and delivers them to the surface of YfiZ/YfhA. This is Probable siderophore-binding lipoprotein YfiY (yfiY) from Bacillus subtilis (strain 168).